The sequence spans 36 residues: Phosphoglycerate kinase, chloroplastic (36 aa).

Ala22, Asp23, and Asn25 together coordinate (2R)-3-phosphoglycerate.

Belongs to the phosphoglycerate kinase family. Monomer. Requires Mg(2+) as cofactor.

The protein resides in the plastid. The protein localises to the chloroplast. The catalysed reaction is (2R)-3-phosphoglycerate + ATP = (2R)-3-phospho-glyceroyl phosphate + ADP. It participates in carbohydrate biosynthesis; Calvin cycle. The polypeptide is Phosphoglycerate kinase, chloroplastic (Scenedesmus fuscus (Green alga)).